A 235-amino-acid polypeptide reads, in one-letter code: Large ribosomal subunit protein uL1 (235 aa).

The protein belongs to the universal ribosomal protein uL1 family. In terms of assembly, part of the 50S ribosomal subunit.

Functionally, binds directly to 23S rRNA. The L1 stalk is quite mobile in the ribosome, and is involved in E site tRNA release. Its function is as follows. Protein L1 is also a translational repressor protein, it controls the translation of the L11 operon by binding to its mRNA. This is Large ribosomal subunit protein uL1 from Prochlorococcus marinus (strain MIT 9312).